Consider the following 360-residue polypeptide: Dynein intermediate light chain dil1 (360 aa).

The protein belongs to the dynein light intermediate chain DYN3 family. The dynein complex consists of at least two heavy chains and a number of intermediate and light chains. Interacts with rga3, sec10, sec16, syp1, rvb2, spbc19c7.04c, spbc2f12.05 and spac3a11.10c. The N-terminal part is acetylated.

It localises to the cytoplasm. It is found in the cytoskeleton. In terms of biological role, component of the cytoplasmic dynein which acts as a motor for the intracellular retrograde motility of vesicles and organelles along microtubules. Promotes oscillatory nuclear movement and efficient pairing of homologous centromeres during meiotic prophase. In Schizosaccharomyces pombe (strain 972 / ATCC 24843) (Fission yeast), this protein is Dynein intermediate light chain dil1 (dil1).